The primary structure comprises 493 residues: Glutamate--tRNA ligase (493 aa).

The 'HIGH' region signature appears at 10-20 (PSPTGDPHVGT). Residues 251 to 255 (KLSKR) carry the 'KMSKS' region motif. Residue K254 participates in ATP binding.

Belongs to the class-I aminoacyl-tRNA synthetase family. Glutamate--tRNA ligase type 1 subfamily. As to quaternary structure, monomer.

The protein resides in the cytoplasm. It carries out the reaction tRNA(Glu) + L-glutamate + ATP = L-glutamyl-tRNA(Glu) + AMP + diphosphate. Catalyzes the attachment of glutamate to tRNA(Glu) in a two-step reaction: glutamate is first activated by ATP to form Glu-AMP and then transferred to the acceptor end of tRNA(Glu). This is Glutamate--tRNA ligase from Pseudomonas syringae pv. syringae (strain B728a).